The sequence spans 358 residues: MKQIQVDLGVRSYPIIFSQNLMSCGEHFARYLQDKNILIVTNETIAPLYLEKLQTVLSSFNCVAPVILPDGEQYKTLEQMDSIFTSLLQQNLGRDTVLIALGGGVVGDMTGFAAASYQRGIDFIQVPTTLLAQVDSSVGGKTAVNHPLGKNMIGAFYQPKMVMIDIDCLNTLPPREFSAGMAEVIKYGIIWDAEFFKWLEDNIEQLKSLDAQALTYAIGRCCEIKAEVVARDETEQGVRALLNLGHTFGHAIEAEMGYGVWLHGEAVAAGTVLAANTASGMDLIDESIVCRIIKLFEAFDLPVSPPNSMNFEDFIRHMRRDKKVLKGQLRLVLPEAIGQAGIYCEVSDELLETVIRCA.

Residues 70–75, 104–108, 128–129, Lys-141, Lys-150, and 168–171 each bind NAD(+); these read DGEQYK, GVVGD, TT, and CLNT. Residues Glu-183, His-246, and His-263 each coordinate Zn(2+).

Belongs to the sugar phosphate cyclases superfamily. Dehydroquinate synthase family. The cofactor is Co(2+). Zn(2+) serves as cofactor. NAD(+) is required as a cofactor.

It localises to the cytoplasm. It catalyses the reaction 7-phospho-2-dehydro-3-deoxy-D-arabino-heptonate = 3-dehydroquinate + phosphate. It functions in the pathway metabolic intermediate biosynthesis; chorismate biosynthesis; chorismate from D-erythrose 4-phosphate and phosphoenolpyruvate: step 2/7. Catalyzes the conversion of 3-deoxy-D-arabino-heptulosonate 7-phosphate (DAHP) to dehydroquinate (DHQ). This chain is 3-dehydroquinate synthase, found in Shewanella sediminis (strain HAW-EB3).